The primary structure comprises 234 residues: Zinc finger FYVE domain-containing protein 21 (234 aa).

The FYVE-type zinc-finger motif lies at 44 to 104; it reads DKECPRCMQC…QCADCALVSH (61 aa). Cys50, Cys53, Cys66, Cys69, Cys74, Cys77, Cys96, and Cys99 together coordinate Zn(2+). A PH-like region spans residues 107–234; the sequence is AEFYDKQLKV…TKLLYESRDQ (128 aa).

In terms of assembly, interacts with PTK2/FAK1.

It is found in the cell junction. Its subcellular location is the focal adhesion. It localises to the cytoplasmic vesicle. The protein resides in the endosome. In terms of biological role, plays a role in cell adhesion, and thereby in cell motility which requires repeated formation and disassembly of focal adhesions. Regulates microtubule-induced PTK2/FAK1 dephosphorylation, an event important for focal adhesion disassembly, as well as integrin beta-1/ITGB1 cell surface expression. The protein is Zinc finger FYVE domain-containing protein 21 (Zfyve21) of Rattus norvegicus (Rat).